The sequence spans 435 residues: Sex peptide receptor (435 aa).

Residues methionine 1–glycine 93 are Extracellular-facing. A helical transmembrane segment spans residues tyrosine 94–leucine 114. The Cytoplasmic portion of the chain corresponds to serine 115–asparagine 124. Residues phenylalanine 125 to leucine 145 form a helical membrane-spanning segment. Residues tryptophan 146 to serine 168 are Extracellular-facing. The helical transmembrane segment at isoleucine 169 to leucine 189 threads the bilayer. Topologically, residues alanine 190 to arginine 211 are cytoplasmic. The chain crosses the membrane as a helical span at residues valine 212 to proline 229. The Extracellular portion of the chain corresponds to arginine 230 to arginine 276. Residues valine 277 to alanine 297 traverse the membrane as a helical segment. Topologically, residues alanine 298–threonine 327 are cytoplasmic. Residues threonine 328–valine 348 form a helical membrane-spanning segment. The Extracellular segment spans residues threonine 349–asparagine 368. A helical transmembrane segment spans residues isoleucine 369–tyrosine 389. Residues cysteine 390–leucine 435 are Cytoplasmic-facing.

This sequence belongs to the G-protein coupled receptor 1 family. In the female, expressed in the reproductive organs; strongly expressed in the spermathecae and the lower oviduct. No expression in the male reproductive organs. In the central nervous system of both sexes, it is expressed in the brain and ventral nerve cord (VNC); strongly expressed in the ventral regions of the suboesophageal ganglion, the cervical connective and in many nerve roots of the brain and VNC. Expressed in the s-LNvs and l-LNvs pdf neurons (at protein level).

Its subcellular location is the cell membrane. Receptor for two functionally unrelated ligands; SP (A70A) for controlling reproductive behaviors and MIP for controlling sleep behavior. MIP-SPR pathway functions as a sleep homeostat which perceives the need for sleep and stabilizes it by providing a slow-acting inhibitory input to the fly arousal system that involve the pigment dispersing factor (pdf) neurons. SP-SPR is one of the multiple SP pathways that induce female post-mating behavioral responses (PMR) such as the suppression of mating receptivity and initiation of egg laying. The PMR switch is achieved by mediating the synaptic output of neurons such as those expressing fruitless (fru), double sex (dsx) and pickpocket (ppk). The polypeptide is Sex peptide receptor (Drosophila melanogaster (Fruit fly)).